Consider the following 588-residue polypeptide: Aspartate--tRNA ligase (588 aa).

Glutamate 174 provides a ligand contact to L-aspartate. Residues 198–201 are aspartate; sequence QLFK. Arginine 220 provides a ligand contact to L-aspartate. ATP contacts are provided by residues 220 to 222 and glutamine 229; that span reads RDE. Residue histidine 448 participates in L-aspartate binding. Glutamate 482 lines the ATP pocket. Arginine 489 is a binding site for L-aspartate. 534–537 provides a ligand contact to ATP; sequence GIDR.

Belongs to the class-II aminoacyl-tRNA synthetase family. Type 1 subfamily. In terms of assembly, homodimer.

It localises to the cytoplasm. The enzyme catalyses tRNA(Asp) + L-aspartate + ATP = L-aspartyl-tRNA(Asp) + AMP + diphosphate. Its function is as follows. Catalyzes the attachment of L-aspartate to tRNA(Asp) in a two-step reaction: L-aspartate is first activated by ATP to form Asp-AMP and then transferred to the acceptor end of tRNA(Asp). The protein is Aspartate--tRNA ligase of Xanthomonas oryzae pv. oryzae (strain PXO99A).